We begin with the raw amino-acid sequence, 1320 residues long: CAP-Gly domain-containing linker protein 1 (1320 aa).

A disordered region spans residues 1–53 (MSMLKPSGLKAPTKILKPGSTALKTPAAAAAPLEKTVPSEKASGPPSSETQEE). Positions 21-35 (TALKTPAAAAAPLEK) are enriched in low complexity. A Phosphoserine modification is found at S48. Position 50 is a phosphothreonine (T50). Positions 78 to 120 (GETQFAPGQWAGIVLDEPIGKNDGSVAGVRYFQCEPLKGIFTR) constitute a CAP-Gly 1 domain. An important for tubulin binding region spans residues 97–101 (GKNDG). S146 carries the post-translational modification Phosphoserine. Residues 156-171 (VSSSPATPSNIPQKPS) are compositionally biased toward polar residues. Residues 156-181 (VSSSPATPSNIPQKPSQPVAKETSAT) are disordered. T181 carries the post-translational modification Phosphothreonine. Residues S194, S196, S199, and S203 each carry the phosphoserine modification. Positions 231–273 (GETDFAKGEWCGVELDEPLGKNDGAVAGTRYFQCQPKYGLFAP) constitute a CAP-Gly 2 domain. Low complexity predominate over residues 301 to 331 (TTPASLKRSPSASSLSSMSSVASSVSSKPSR). Positions 301–338 (TTPASLKRSPSASSLSSMSSVASSVSSKPSRTGLLTET) are disordered. Position 309 is a phosphoserine (S309). S311 is modified (phosphoserine; by PKA). A phosphoserine mark is found at S314 and S347. The tract at residues 1089 to 1109 (SLPSNTLRESEYRKDADEEKA) is disordered. Residues 1096–1109 (RESEYRKDADEEKA) show a composition bias toward basic and acidic residues. S1116 bears the Phosphoserine mark. Residues 1178–1201 (KRQLSSSSGNTDVQTEEDERAQES) form a disordered region. Polar residues predominate over residues 1180 to 1190 (QLSSSSGNTDV). Position 1246 is a phosphoserine (S1246). The CCHC-type zinc finger occupies 1299-1316 (PYCEICEMFGHWATNCND).

In terms of assembly, interacts with MTOR; phosphorylates and regulates CLIP1. Interacts (via CAP-Gly domains) with tubulin and TUBA1B. Interacts with SLAIN2. Interacts with MAPRE1 and MAPRE3. Interacts (via zinc finger) with DCTN1. Binds preferentially to tyrosinated microtubules, and only marginally to detyrosinated microtubules. In terms of processing, phosphorylated. Phosphorylation induces conformational changes by increasing the affinity of the N-terminus for C-terminus, resulting in inhibition of its function thus decreasing its binding to microtubules and DCTN1. Exhibits a folded, autoinhibited conformation when phosphorylated and an open conformation when dephosphorylated with increased binding affinity to microtubules and DCTN1. Phosphorylation regulates its recruitment to tyrosinated microtubules and the recruitment of vesicular cargo to microtubules in neurons. Phosphorylation by MTOR may positively regulate CLIP1 association with microtubules.

The protein resides in the cytoplasm. It is found in the cytoskeleton. The protein localises to the cytoplasmic vesicle membrane. Its subcellular location is the cell projection. It localises to the ruffle. Its function is as follows. Binds to the plus end of microtubules and regulates the dynamics of the microtubule cytoskeleton. Promotes microtubule growth and microtubule bundling. Links cytoplasmic vesicles to microtubules and thereby plays an important role in intracellular vesicle trafficking. Plays a role macropinocytosis and endosome trafficking. This Rattus norvegicus (Rat) protein is CAP-Gly domain-containing linker protein 1 (Clip1).